Consider the following 85-residue polypeptide: UPF0291 protein SpyM3_1470 (85 aa).

A disordered region spans residues 62–85 (TPEKLRQVQREKGLHGRSLDDPKS).

The protein belongs to the UPF0291 family.

Its subcellular location is the cytoplasm. The sequence is that of UPF0291 protein SpyM3_1470 from Streptococcus pyogenes serotype M3 (strain ATCC BAA-595 / MGAS315).